Consider the following 119-residue polypeptide: UPF0102 protein MS1289 (119 aa).

It belongs to the UPF0102 family.

The sequence is that of UPF0102 protein MS1289 from Mannheimia succiniciproducens (strain KCTC 0769BP / MBEL55E).